We begin with the raw amino-acid sequence, 73 residues long: Sec-independent protein translocase protein TatA (73 aa).

Residues 1-21 (MGSFSIWHWLIVLVIVMLVFG) traverse the membrane as a helical segment. The segment at 44–73 (KSAEDPNEQIPQSTTTAEKTVDVQAKDINK) is disordered. Positions 52–61 (QIPQSTTTAE) are enriched in polar residues. Residues 62 to 73 (KTVDVQAKDINK) show a composition bias toward basic and acidic residues.

Belongs to the TatA/E family. The Tat system comprises two distinct complexes: a TatABC complex, containing multiple copies of TatA, TatB and TatC subunits, and a separate TatA complex, containing only TatA subunits. Substrates initially bind to the TatABC complex, which probably triggers association of the separate TatA complex to form the active translocon.

The protein localises to the cell inner membrane. In terms of biological role, part of the twin-arginine translocation (Tat) system that transports large folded proteins containing a characteristic twin-arginine motif in their signal peptide across membranes. TatA could form the protein-conducting channel of the Tat system. This Polynucleobacter asymbioticus (strain DSM 18221 / CIP 109841 / QLW-P1DMWA-1) (Polynucleobacter necessarius subsp. asymbioticus) protein is Sec-independent protein translocase protein TatA.